Reading from the N-terminus, the 267-residue chain is Hydroxyacylglutathione hydrolase (267 aa).

Residues histidine 55, histidine 57, aspartate 59, histidine 60, histidine 121, aspartate 138, and histidine 176 each coordinate Zn(2+).

This sequence belongs to the metallo-beta-lactamase superfamily. Glyoxalase II family. Monomer. Requires Zn(2+) as cofactor.

The catalysed reaction is an S-(2-hydroxyacyl)glutathione + H2O = a 2-hydroxy carboxylate + glutathione + H(+). Its pathway is secondary metabolite metabolism; methylglyoxal degradation; (R)-lactate from methylglyoxal: step 2/2. Functionally, thiolesterase that catalyzes the hydrolysis of S-D-lactoyl-glutathione to form glutathione and D-lactic acid. The polypeptide is Hydroxyacylglutathione hydrolase (Shewanella sp. (strain ANA-3)).